Reading from the N-terminus, the 480-residue chain is RAC-alpha serine/threonine-protein kinase (480 aa).

Residues 5-108 enclose the PH domain; the sequence is AIVKEGWLHK…WTTAIQTVAD (104 aa). K14 and K20 each carry N6-acetyllysine. 14 to 19 contacts 1D-myo-inositol 1,3,4,5-tetrakisphosphate; the sequence is KRGEYI. 1D-myo-inositol 1,3,4,5-tetrakisphosphate is bound by residues 23-25 and N53; that span reads RPR. An intrachain disulfide couples C60 to C77. Residue R86 coordinates 1D-myo-inositol 1,3,4,5-tetrakisphosphate. S124 carries the post-translational modification Phosphoserine. S129 carries the post-translational modification Phosphoserine; alternate. An O-linked (GlcNAc) serine; alternate glycan is attached at S129. Residues 150–408 enclose the Protein kinase domain; the sequence is FEYLKLLGKG…AKEIMQHRFF (259 aa). Residue 156-164 coordinates ATP; sequence LGKGTFGKV. The residue at position 176 (Y176) is a Phosphotyrosine; by TNK2. K179 is a binding site for ATP. D274 serves as the catalytic Proton acceptor. A Glycyl lysine isopeptide (Lys-Gly) (interchain with G-Cter in ubiquitin) cross-link involves residue K284. C296 and C310 are joined by a disulfide. A glycan (O-linked (GlcNAc) threonine) is linked at T305. At T308 the chain carries Phosphothreonine; by PDPK1. T312 carries O-linked (GlcNAc) threonine glycosylation. Residues 409 to 480 enclose the AGC-kinase C-terminal domain; it reads ASIVWQDVYE…QFSYSASATA (72 aa). T448 carries the phosphothreonine modification. A Phosphothreonine; by MTOR modification is found at T450. Residues 450–480 form a disordered region; that stretch reads TPPDQDDSMEGVDSERRPHFPQFSYSASATA. O-linked (GlcNAc) serine; alternate glycosylation is present at S473. A Phosphoserine; by MTOR; alternate modification is found at S473. At Y474 the chain carries Phosphotyrosine. Position 477 is a phosphoserine (S477). Position 479 is a phosphothreonine (T479).

The protein belongs to the protein kinase superfamily. AGC Ser/Thr protein kinase family. RAC subfamily. As to quaternary structure, interacts (via the C-terminus) with CCDC88A (via its C-terminus) and THEM4 (via its C-terminus). Interacts with AKTIP. Interacts (via PH domain) with MTCP1, TCL1A and TCL1B. Interacts with TRAF6. Interacts with GRB10; the interaction leads to GRB10 phosphorylation thus promoting YWHAE binding. Interacts with RARA; the interaction phosphorylates RARA and represses its transactivation activity. Interacts with MAP3K5 and TNK2. Interacts with BAD, CLK2, PPP2R5B, STK3 and STK4. Interacts (via PH domain) with SIRT1. Interacts with SRPK2 in a phosphorylation-dependent manner. Interacts with RAF1. Interacts with PKN2 (via C-terminal domain); the interaction occurs with the C-terminus cleavage products of PKN2 in apoptotic cells. Interacts with TRIM13; the interaction ubiquitinates AKT1 leading to its proteasomal degradation. Interacts with and phosphorylated by PDPK1. Interacts with BTBD10. Interacts with KCTD20. Interacts with PA2G4. Interacts with PA2G4. Interacts with KIF14; the interaction is detected in the plasma membrane upon INS stimulation and promotes AKT1 phosphorylation. Interacts with FAM83B; activates the PI3K/AKT signaling cascade. Interacts with WDFY2 (via WD repeats 1-3). Forms a complex with WDFY2 and FOXO1. Interacts with FAM168A. Interacts with SYAP1 (via phosphorylated form and BSD domain); this interaction is enhanced in a mTORC2-mediated manner in response to epidermal growth factor (EGF) stimulation and activates AKT1. Interacts with PKHM3. Interacts with FKBP5/FKBP51; promoting interaction between Akt/AKT1 and PHLPP1, thereby enhancing dephosphorylation and subsequent activation of Akt/AKT1. Interacts with TMEM175; leading to formation of the lysoK(GF) complex. In terms of processing, O-GlcNAcylation at Thr-305 and Thr-312 inhibits activating phosphorylation at Thr-308 via disrupting the interaction between AKT1 and PDPK1. O-GlcNAcylation at Ser-473 also probably interferes with phosphorylation at this site. Phosphorylation on Thr-308, Ser-473 and Tyr-474 is required for full activity. Phosphorylation of the activation loop at Thr-308 by PDPK1/PDK1 is a prerequisite for full activation. Phosphorylation by mTORC2 in response to growth factors plays a key role in AKT1 activation: mTORC2 phosphorylates different sites depending on the context, such as Thr-450, Ser-473, Ser-477 or Thr-479, thereby facilitating subsequent phosphorylation of the activation loop by PDPK1/PDK1. Phosphorylation at Ser-473 by mTORC2 promotes ubiquitination and degradation by the proteasome. Also phosphorylated at Ser-477 and Thr-479 by CDK2, facilitating subsequent phosphorylation of the activation loop by PDPK1/PDK1. Activated TNK2 phosphorylates it on Tyr-176 resulting in its binding to the anionic plasma membrane phospholipid PA. This phosphorylated form localizes to the cell membrane, where it is targeted by PDPK1 and PDPK2 for further phosphorylations on Thr-308 and Ser-473 leading to its activation. Phosphorylated at Thr-308 and Ser-473 by IKBKE and TBK1. Ser-473 phosphorylation is enhanced by interaction with AGAP2 isoform 2 (PIKE-A). Ser-473 phosphorylation is enhanced by signaling through activated FLT3. Ser-473 is dephosphorylated by PHLPP. Dephosphorylated at Thr-308 and Ser-473 by PP2A phosphatase. The phosphorylated form of PPP2R5B is required for bridging AKT1 with PP2A phosphatase. Ser-473 is dephosphorylated by CPPED1, leading to termination of signaling. AIM2 acts as an inhibitor of AKT1 by inhibiting phosphorylation Ser-473: AIM2 acts both by inhibiting the activity of PRKDC/DNA-PK kinase and promoting dephosphorylation by PP2A phosphatase. Post-translationally, ubiquitinated; undergoes both 'Lys-48'- and 'Lys-63'-linked polyubiquitination. TRAF6-induced 'Lys-63'-linked AKT1 ubiquitination is critical for phosphorylation and activation. When ubiquitinated, it translocates to the plasma membrane, where it becomes phosphorylated. When fully phosphorylated and translocated into the nucleus, undergoes 'Lys-48'-polyubiquitination catalyzed by TTC3, leading to its degradation by the proteasome. Ubiquitinated via 'Lys-48'-linked polyubiquitination by ZNRF1, leading to its degradation by the proteasome. Also ubiquitinated by TRIM13 leading to its proteasomal degradation. Phosphorylated, undergoes 'Lys-48'-linked polyubiquitination preferentially at Lys-284 catalyzed by MUL1, leading to its proteasomal degradation. In terms of processing, acetylated on Lys-14 and Lys-20 by the histone acetyltransferases EP300 and KAT2B. Acetylation results in reduced phosphorylation and inhibition of activity. Deacetylated at Lys-14 and Lys-20 by SIRT1. SIRT1-mediated deacetylation relieves the inhibition. Cleavage by caspase-3/CASP3. Cleaved at the caspase-3 consensus site Asp-462 during apoptosis, resulting in down-regulation of the AKT signaling pathway and decreased cell survival.

It is found in the cytoplasm. It localises to the nucleus. Its subcellular location is the cell membrane. The protein localises to the mitochondrion intermembrane space. The catalysed reaction is L-seryl-[protein] + ATP = O-phospho-L-seryl-[protein] + ADP + H(+). The enzyme catalyses L-threonyl-[protein] + ATP = O-phospho-L-threonyl-[protein] + ADP + H(+). Functionally, AKT1 is one of 3 closely related serine/threonine-protein kinases (AKT1, AKT2 and AKT3) called the AKT kinase, and which regulate many processes including metabolism, proliferation, cell survival, growth and angiogenesis. This is mediated through serine and/or threonine phosphorylation of a range of downstream substrates. Over 100 substrate candidates have been reported so far, but for most of them, no isoform specificity has been reported. AKT is responsible of the regulation of glucose uptake by mediating insulin-induced translocation of the SLC2A4/GLUT4 glucose transporter to the cell surface. Phosphorylation of PTPN1 at 'Ser-50' negatively modulates its phosphatase activity preventing dephosphorylation of the insulin receptor and the attenuation of insulin signaling. Phosphorylation of TBC1D4 triggers the binding of this effector to inhibitory 14-3-3 proteins, which is required for insulin-stimulated glucose transport. AKT also regulates the storage of glucose in the form of glycogen by phosphorylating GSK3A at 'Ser-21' and GSK3B at 'Ser-9', resulting in inhibition of its kinase activity. Phosphorylation of GSK3 isoforms by AKT is also thought to be one mechanism by which cell proliferation is driven. AKT also regulates cell survival via the phosphorylation of MAP3K5 (apoptosis signal-related kinase). Phosphorylation of 'Ser-83' decreases MAP3K5 kinase activity stimulated by oxidative stress and thereby prevents apoptosis. AKT mediates insulin-stimulated protein synthesis by phosphorylating TSC2 at 'Ser-939' and 'Thr-1462', thereby activating the mTORC1 signaling pathway, and leading to both phosphorylation of 4E-BP1 and in activation of RPS6KB1. Also regulates the mTORC1 signaling pathway by catalyzing phosphorylation of CASTOR1 and DEPDC5. AKT plays a role as key modulator of the AKT-mTOR signaling pathway controlling the tempo of the process of newborn neurons integration during adult neurogenesis, including correct neuron positioning, dendritic development and synapse formation. Part of a positive feedback loop of mTORC2 signaling by mediating phosphorylation of MAPKAP1/SIN1, promoting mTORC2 activation. AKT is involved in the phosphorylation of members of the FOXO factors (Forkhead family of transcription factors), leading to binding of 14-3-3 proteins and cytoplasmic localization. In particular, FOXO1 is phosphorylated at 'Thr-24', 'Ser-256' and 'Ser-319'. FOXO3 and FOXO4 are phosphorylated on equivalent sites. AKT has an important role in the regulation of NF-kappa-B-dependent gene transcription and positively regulates the activity of CREB1 (cyclic AMP (cAMP)-response element binding protein). The phosphorylation of CREB1 induces the binding of accessory proteins that are necessary for the transcription of pro-survival genes such as BCL2 and MCL1. AKT phosphorylates 'Ser-454' on ATP citrate lyase (ACLY), thereby potentially regulating ACLY activity and fatty acid synthesis. Activates the 3B isoform of cyclic nucleotide phosphodiesterase (PDE3B) via phosphorylation of 'Ser-273', resulting in reduced cyclic AMP levels and inhibition of lipolysis. Phosphorylates PIKFYVE on 'Ser-318', which results in increased PI(3)P-5 activity. The Rho GTPase-activating protein DLC1 is another substrate and its phosphorylation is implicated in the regulation cell proliferation and cell growth. Signals downstream of phosphatidylinositol 3-kinase (PI(3)K) to mediate the effects of various growth factors such as platelet-derived growth factor (PDGF), epidermal growth factor (EGF), insulin and insulin-like growth factor 1 (IGF1). AKT mediates the antiapoptotic effects of IGF1. Essential for the SPATA13-mediated regulation of cell migration and adhesion assembly and disassembly. May be involved in the regulation of the placental development. Phosphorylates STK4/MST1 at 'Thr-120' and 'Thr-387' leading to inhibition of its: kinase activity, nuclear translocation, autophosphorylation and ability to phosphorylate FOXO3. Phosphorylates STK3/MST2 at 'Thr-117' and 'Thr-384' leading to inhibition of its: cleavage, kinase activity, autophosphorylation at Thr-180, binding to RASSF1 and nuclear translocation. Phosphorylates SRPK2 and enhances its kinase activity towards SRSF2 and ACIN1 and promotes its nuclear translocation. Phosphorylates RAF1 at 'Ser-259' and negatively regulates its activity. Phosphorylation of BAD stimulates its pro-apoptotic activity. Phosphorylates KAT6A at 'Thr-369' and this phosphorylation inhibits the interaction of KAT6A with PML and negatively regulates its acetylation activity towards p53/TP53. Phosphorylates palladin (PALLD), modulating cytoskeletal organization and cell motility. Phosphorylates prohibitin (PHB), playing an important role in cell metabolism and proliferation. Phosphorylates CDKN1A, for which phosphorylation at 'Thr-145' induces its release from CDK2 and cytoplasmic relocalization. These recent findings indicate that the AKT1 isoform has a more specific role in cell motility and proliferation. Phosphorylates CLK2 thereby controlling cell survival to ionizing radiation. Phosphorylates PCK1 at 'Ser-90', reducing the binding affinity of PCK1 to oxaloacetate and changing PCK1 into an atypical protein kinase activity using GTP as donor. Also acts as an activator of TMEM175 potassium channel activity in response to growth factors: forms the lysoK(GF) complex together with TMEM175 and acts by promoting TMEM175 channel activation, independently of its protein kinase activity. Acts as a negative regulator of the cGAS-STING pathway by mediating phosphorylation of CGAS during mitosis, leading to its inhibition. Acts as a regulator of mitochondrial calcium uptake by mediating phosphorylation of MICU1 in the mitochondrial intermembrane space, impairing MICU1 maturation. Acts as an inhibitor of tRNA methylation by mediating phosphorylation of the N-terminus of METTL1, thereby inhibiting METTL1 methyltransferase activity. In response to LPAR1 receptor pathway activation, phosphorylates Rabin8/RAB3IP which alters its activity and phosphorylates WDR44 which induces WDR44 binding to Rab11, thereby switching Rab11 vesicular function from preciliary trafficking to endocytic recycling. The protein is RAC-alpha serine/threonine-protein kinase (AKT1) of Bos taurus (Bovine).